Here is an 896-residue protein sequence, read N- to C-terminus: Translation initiation factor IF-2 (896 aa).

Residues Leu-46–Arg-315 are disordered. A compositionally biased stretch (basic and acidic residues) spans Ser-99–His-247. The span at Ser-269–Arg-278 shows a compositional bias: basic residues. Residues Lys-279–Arg-288 show a composition bias toward basic and acidic residues. Positions Pro-396–Arg-565 constitute a tr-type G domain. Positions Gly-405–Thr-412 are G1. Gly-405–Thr-412 contacts GTP. The G2 stretch occupies residues Gly-430–His-434. Residues Asp-451–Gly-454 are G3. GTP is bound by residues Asp-451–His-455 and Asn-505–Asp-508. A G4 region spans residues Asn-505 to Asp-508. The tract at residues Ser-541–His-543 is G5.

This sequence belongs to the TRAFAC class translation factor GTPase superfamily. Classic translation factor GTPase family. IF-2 subfamily.

It localises to the cytoplasm. Its function is as follows. One of the essential components for the initiation of protein synthesis. Protects formylmethionyl-tRNA from spontaneous hydrolysis and promotes its binding to the 30S ribosomal subunits. Also involved in the hydrolysis of GTP during the formation of the 70S ribosomal complex. The sequence is that of Translation initiation factor IF-2 from Idiomarina loihiensis (strain ATCC BAA-735 / DSM 15497 / L2-TR).